The primary structure comprises 228 residues: Phosphatidate cytidylyltransferase (228 aa).

6 helical membrane-spanning segments follow: residues 31–51 (FVVA…LVGL), 65–85 (IHYL…LIFL), 93–113 (LVIM…MIGG), 131–151 (WTGL…VSLI), 165–185 (IYLF…DLFI), and 206–226 (GVLD…GINI).

Belongs to the CDS family.

The protein resides in the cell membrane. The catalysed reaction is a 1,2-diacyl-sn-glycero-3-phosphate + CTP + H(+) = a CDP-1,2-diacyl-sn-glycerol + diphosphate. It participates in phospholipid metabolism; CDP-diacylglycerol biosynthesis; CDP-diacylglycerol from sn-glycerol 3-phosphate: step 3/3. The polypeptide is Phosphatidate cytidylyltransferase (cdsA) (Rickettsia typhi (strain ATCC VR-144 / Wilmington)).